Reading from the N-terminus, the 406-residue chain is Acetyltransferase sirH (406 aa).

6 helical membrane-spanning segments follow: residues 9–29 (IFIE…FALG), 32–52 (AHTF…CQSL), 63–83 (LLSN…WILL), 295–315 (VQLF…ALLC), 323–343 (SALF…HVIA), and 358–378 (FIGF…WVGS).

This sequence belongs to the wax synthase family.

It is found in the membrane. Its pathway is mycotoxin biosynthesis. Functionally, acetyltransferase; part of the gene cluster that mediates the biosynthesis of sirodesmin PL, an epipolythiodioxopiperazine (ETP) characterized by a disulfide bridged cyclic dipeptide and that acts as a phytotoxin which is involved in the blackleg didease of canola. SirD catalyzes the O-prenylation of L-tyrosine (L-Tyr) in the presence of dimethylallyl diphosphate (DMAPP) to yield 4-O-dimethylallyl-L-Tyr, and therefore represents probably the first pathway-specific enzyme in the biosynthesis of sirodesmin PL. 4-O-dimethylallyl-L-Tyr, then undergoes condensation with L-Ser in a reaction catalyzed by the non-ribosomal peptide synthase sirP to form the diketopiperazine (DKP) backbone. Further bishydroxylation of the DKP performed by the cytochrome P450 monooxygenase sirC leads to the production of the intermediate phomamide. This step is essential to form the reactive thiol group required for toxicity of sirodesmin PL. The next steps of sirodesmin biosynthesis are not well understood yet, but some predictions could be made from intermediate compounds identification. Phomamide is converted into phomalizarine via oxidation, probably by sirT. Further oxidation, methylation (by sirM or sirN) and reduction steps convert phomalizarine to deacetyl sirodesmin. Finally, acetyltransferase sirH probably acetylates deacetyl sirodesmin to produce sirodesmin PL. In Leptosphaeria maculans (Blackleg fungus), this protein is Acetyltransferase sirH.